A 494-amino-acid chain; its full sequence is ATP-dependent RNA helicase HAS1 (494 aa).

Positions Met1 to Glu23 are disordered. The short motif at His29–Ala57 is the Q motif element. The region spanning Ile60–Phe236 is the Helicase ATP-binding domain. Ala73 to Thr80 provides a ligand contact to ATP. Residues Asp183–Asp186 carry the DEAD box motif. One can recognise a Helicase C-terminal domain in the interval Gly250–Ile420. Positions Lys262–Lys278 match the Bipartite nuclear localization signal motif.

The protein belongs to the DEAD box helicase family. DDX18/HAS1 subfamily. As to quaternary structure, associates in the nucleolus with the 60S and pre-60S ribosomal subunits.

It is found in the nucleus. The protein localises to the nucleolus. It catalyses the reaction ATP + H2O = ADP + phosphate + H(+). ATP-dependent RNA helicase involved in 40S ribosomal subunit biogenesis. Required for the processing and cleavage of 35S pre-rRNA at sites A0, A1, and A2, leading to mature 18S rRNA. This Candida glabrata (strain ATCC 2001 / BCRC 20586 / JCM 3761 / NBRC 0622 / NRRL Y-65 / CBS 138) (Yeast) protein is ATP-dependent RNA helicase HAS1 (HAS1).